Here is a 575-residue protein sequence, read N- to C-terminus: Sodium/hydrogen exchanger 8 (575 aa).

11 helical membrane passes run 54-74 (MTIF…HLLI), 78-98 (LHFL…GAVI), 117-137 (PNMF…YSLH), 150-170 (LFAV…IYFL), 185-205 (FAFG…IFNA), 255-275 (LGYF…TGLI), 305-325 (GLAE…GIVM), 348-368 (VAFL…FSFP), 373-393 (ISFV…NIFP), 411-431 (MFIM…SLHL), and 445-465 (TTII…MPLI). A Phosphothreonine modification is found at Thr504. 2 positions are modified to phosphoserine: Ser565 and Ser567.

The protein belongs to the monovalent cation:proton antiporter 1 (CPA1) transporter (TC 2.A.36) family. As to expression, intestine and kidneys.

The protein localises to the golgi apparatus membrane. The protein resides in the golgi apparatus. It localises to the trans-Golgi network membrane. Its subcellular location is the endosome. It is found in the multivesicular body membrane. The protein localises to the apical cell membrane. The protein resides in the cytoplasmic vesicle. It localises to the secretory vesicle. Its subcellular location is the acrosome. It carries out the reaction Na(+)(in) + H(+)(out) = Na(+)(out) + H(+)(in). With respect to regulation, expression and activity are regulated by acid media by increasing the rate of trafficking to the apical membrane. Inhibited by HOE694 and S3226. Its function is as follows. Na(+)/H(+) antiporter. Mediates the electoneutral exchange of intracellular H(+) ions for extracellular Na(+) in 1:1 stoichiometry. Acts as an Na(+)/H(+) exchanger in the trans-Golgi. Contributes to the regulation of pH regulation of Golgi apparatus, and consequently, in protein trafficking and endosomal morphology. In germ cells, plays a crucial role in acrosome biogenesis and sperm development, probably by playing a role in the fusion of the Golgi-derived vesicles that form the acrosomal cap. Can also be active at the cell surface of specialized cells. In the small intestine, at the cell membrane, plays a major physiological role in transepithelial absorption of Na(+) and regulates intracellular pH homeostasis of intestinal epithelial cells. Acts as an important regulator of mucosal integrity in the intestine and in the stomach, could mediate the pH fluctuation necessary for mucin exocytosis or assist membrane trafficking of other proteins. Plays a role in photoreceptor survival and in the maintenance of intracellular pH homeostasis in retinal pigment epithelium (RPE cells). The polypeptide is Sodium/hydrogen exchanger 8 (Slc9a8) (Rattus norvegicus (Rat)).